The following is a 443-amino-acid chain: Thymidine phosphorylase (443 aa).

Belongs to the thymidine/pyrimidine-nucleoside phosphorylase family. Homodimer.

The catalysed reaction is thymidine + phosphate = 2-deoxy-alpha-D-ribose 1-phosphate + thymine. The protein operates within pyrimidine metabolism; dTMP biosynthesis via salvage pathway; dTMP from thymine: step 1/2. In terms of biological role, the enzymes which catalyze the reversible phosphorolysis of pyrimidine nucleosides are involved in the degradation of these compounds and in their utilization as carbon and energy sources, or in the rescue of pyrimidine bases for nucleotide synthesis. This Shewanella pealeana (strain ATCC 700345 / ANG-SQ1) protein is Thymidine phosphorylase.